A 439-amino-acid polypeptide reads, in one-letter code: UPF0489 protein C5orf22 homolog (439 aa).

A disordered region spans residues threonine 163 to aspartate 219. The span at alanine 179 to glutamate 211 shows a compositional bias: polar residues.

It belongs to the UPF0489 family.

The polypeptide is UPF0489 protein C5orf22 homolog (Danio rerio (Zebrafish)).